Here is a 117-residue protein sequence, read N- to C-terminus: LIM and senescent cell antigen-like-containing domain protein 3 (117 aa).

An LIM zinc-binding domain is found at Ala-70 to Thr-117.

In terms of tissue distribution, detected in testis.

The protein resides in the cytoplasm. This is LIM and senescent cell antigen-like-containing domain protein 3 (LIMS3) from Homo sapiens (Human).